A 201-amino-acid chain; its full sequence is Recombination protein RecR (201 aa).

Residues 60 to 75 (CSCCGNVDTSDPCTIC) form a C4-type zinc finger. A Toprim domain is found at 83-178 (ATLIVVEDVS…RVTRLAHGVP (96 aa)).

The protein belongs to the RecR family.

Functionally, may play a role in DNA repair. It seems to be involved in an RecBC-independent recombinational process of DNA repair. It may act with RecF and RecO. The chain is Recombination protein RecR from Brucella ovis (strain ATCC 25840 / 63/290 / NCTC 10512).